The following is a 191-amino-acid chain: Ribosomal RNA small subunit methyltransferase G (191 aa).

S-adenosyl-L-methionine-binding positions include Gly-62, Leu-67, 111–112, and Arg-124; that span reads IE.

The protein belongs to the methyltransferase superfamily. RNA methyltransferase RsmG family.

Its subcellular location is the cytoplasm. It carries out the reaction guanosine(527) in 16S rRNA + S-adenosyl-L-methionine = N(7)-methylguanosine(527) in 16S rRNA + S-adenosyl-L-homocysteine. Specifically methylates the N7 position of guanine in position 527 of 16S rRNA. The sequence is that of Ribosomal RNA small subunit methyltransferase G from Rickettsia rickettsii (strain Sheila Smith).